The following is a 339-amino-acid chain: Transcription initiation factor IIB (339 aa).

The segment at 39 to 70 (EELICPVCGSKSIIKDYERAEIVCEMCGCVLQ) adopts a TFIIB-type zinc-finger fold. Zn(2+)-binding residues include Cys-43, Cys-46, Cys-62, and Cys-65. 2 consecutive repeat copies span residues 156–239 (SELD…SREL) and 250–331 (DYVP…ELTE).

It belongs to the TFIIB family.

Its function is as follows. Stabilizes TBP binding to an archaeal box-A promoter. Also responsible for recruiting RNA polymerase II to the pre-initiation complex (DNA-TBP-TFIIB). The sequence is that of Transcription initiation factor IIB from Methanococcus maripaludis (strain C5 / ATCC BAA-1333).